The primary structure comprises 88 residues: RNA-binding protein Hfq (88 aa).

Positions 9-68 (DPFLNALRCERIPVSIYLVNGIKLQGQIESFDQFVILLKNTVNQMVYKHAISTVVPARAV) constitute a Sm domain. The segment at 66 to 88 (RAVSHHTASDRPQGERPQETTEE) is disordered. Basic and acidic residues predominate over residues 72–88 (TASDRPQGERPQETTEE).

The protein belongs to the Hfq family. Homohexamer.

Functionally, RNA chaperone that binds small regulatory RNA (sRNAs) and mRNAs to facilitate mRNA translational regulation in response to envelope stress, environmental stress and changes in metabolite concentrations. Also binds with high specificity to tRNAs. This is RNA-binding protein Hfq from Aliivibrio salmonicida (strain LFI1238) (Vibrio salmonicida (strain LFI1238)).